A 268-amino-acid chain; its full sequence is Hydroxyethylthiazole kinase 2 (268 aa).

M42 lines the substrate pocket. ATP contacts are provided by K117 and T167. G194 contacts substrate.

The protein belongs to the Thz kinase family. It depends on Mg(2+) as a cofactor.

It carries out the reaction 5-(2-hydroxyethyl)-4-methylthiazole + ATP = 4-methyl-5-(2-phosphooxyethyl)-thiazole + ADP + H(+). It functions in the pathway cofactor biosynthesis; thiamine diphosphate biosynthesis; 4-methyl-5-(2-phosphoethyl)-thiazole from 5-(2-hydroxyethyl)-4-methylthiazole: step 1/1. Functionally, catalyzes the phosphorylation of the hydroxyl group of 4-methyl-5-beta-hydroxyethylthiazole (THZ). This is Hydroxyethylthiazole kinase 2 from Streptococcus pneumoniae (strain CGSP14).